A 461-amino-acid chain; its full sequence is Transcription factor GTE3, chloroplastic (461 aa).

Positions 1–11 are enriched in gly residues; that stretch reads MASGPIAGGGV. The disordered stretch occupies residues 1-41; it reads MASGPIAGGGVSKTKHKWSDSGNKSQKRSKPTVANSNSLGL. A chloroplast-targeting transit peptide spans 1-51; the sequence is MASGPIAGGGVSKTKHKWSDSGNKSQKRSKPTVANSNSLGLEDNHQMMKIS. Positions 114 to 220 constitute a Bromo domain; it reads KGTVQILKSC…NLFEEKWVPL (107 aa). An NET domain is found at 298-379; the sequence is LVEEASANRD…EYKESLSKKK (82 aa). Basic and acidic residues predominate over residues 376–392; that stretch reads SKKKEEQGLDSERDAES. Residues 376-461 form a disordered region; that stretch reads SKKKEEQGLD…SSGHESDTGN (86 aa). Residues 393–412 are compositionally biased toward polar residues; it reads FHNSVHESNTLVTGLESSKV. A compositionally biased stretch (low complexity) spans 429 to 451; sequence GGSSSSNSSSSGSGSGSSGSDSD. Over residues 452 to 461 the composition is skewed to basic and acidic residues; it reads SSGHESDTGN.

Interacts with SIZ1 (via PHD domain). Post-translationally, sumoylated by SIZ1. Sumoylation reduces capacity to bind to acetylated histone H3.

Its subcellular location is the plastid. It is found in the chloroplast. Its function is as follows. Probable transcription factor that binds to acetylated histone H3. In Arabidopsis thaliana (Mouse-ear cress), this protein is Transcription factor GTE3, chloroplastic (GTE3).